The sequence spans 100 residues: Large ribosomal subunit protein uL23 (100 aa).

Belongs to the universal ribosomal protein uL23 family. In terms of assembly, part of the 50S ribosomal subunit. Contacts protein L29, and trigger factor when it is bound to the ribosome.

One of the early assembly proteins it binds 23S rRNA. One of the proteins that surrounds the polypeptide exit tunnel on the outside of the ribosome. Forms the main docking site for trigger factor binding to the ribosome. The protein is Large ribosomal subunit protein uL23 of Prochlorococcus marinus (strain MIT 9312).